Here is a 658-residue protein sequence, read N- to C-terminus: Glycogen debranching enzyme (658 aa).

The active-site Nucleophile is D336. The active-site Proton donor is the E371. Residues 459–484 are disordered; the sequence is EANGEENRDGTNSNYSDNHGKEGLGG.

Belongs to the glycosyl hydrolase 13 family.

It catalyses the reaction Hydrolysis of (1-&gt;6)-alpha-D-glucosidic linkages to branches with degrees of polymerization of three or four glucose residues in limit dextrin.. It participates in glycan degradation; glycogen degradation. In terms of biological role, removes maltotriose and maltotetraose chains that are attached by 1,6-alpha-linkage to the limit dextrin main chain, generating a debranched limit dextrin. The sequence is that of Glycogen debranching enzyme from Salmonella enteritidis PT4 (strain P125109).